Here is a 370-residue protein sequence, read N- to C-terminus: Dual-specificity RNA methyltransferase RlmN (370 aa).

The Proton acceptor role is filled by E97. The 238-residue stretch at 103-340 (EKSRGTLCIS…CTVRRTRGDD (238 aa)) folds into the Radical SAM core domain. C110 and C345 form a disulfide bridge. C117, C121, and C124 together coordinate [4Fe-4S] cluster. S-adenosyl-L-methionine contacts are provided by residues 170–171 (GE), S202, 224–226 (SLH), and N302. The S-methylcysteine intermediate role is filled by C345.

The protein belongs to the radical SAM superfamily. RlmN family. The cofactor is [4Fe-4S] cluster.

The protein localises to the cytoplasm. It carries out the reaction adenosine(2503) in 23S rRNA + 2 reduced [2Fe-2S]-[ferredoxin] + 2 S-adenosyl-L-methionine = 2-methyladenosine(2503) in 23S rRNA + 5'-deoxyadenosine + L-methionine + 2 oxidized [2Fe-2S]-[ferredoxin] + S-adenosyl-L-homocysteine. The enzyme catalyses adenosine(37) in tRNA + 2 reduced [2Fe-2S]-[ferredoxin] + 2 S-adenosyl-L-methionine = 2-methyladenosine(37) in tRNA + 5'-deoxyadenosine + L-methionine + 2 oxidized [2Fe-2S]-[ferredoxin] + S-adenosyl-L-homocysteine. In terms of biological role, specifically methylates position 2 of adenine 2503 in 23S rRNA and position 2 of adenine 37 in tRNAs. m2A2503 modification seems to play a crucial role in the proofreading step occurring at the peptidyl transferase center and thus would serve to optimize ribosomal fidelity. The protein is Dual-specificity RNA methyltransferase RlmN of Hydrogenovibrio crunogenus (strain DSM 25203 / XCL-2) (Thiomicrospira crunogena).